A 383-amino-acid chain; its full sequence is L-lactate dehydrogenase (383 aa).

The region spanning 1-380 (MIISSGNDYR…NTDCLVQAIK (380 aa)) is the FMN hydroxy acid dehydrogenase domain. Position 24 (tyrosine 24) interacts with substrate. 2 residues coordinate FMN: serine 106 and glutamine 127. Tyrosine 129 contributes to the substrate binding site. Residue threonine 155 coordinates FMN. Arginine 164 contacts substrate. Lysine 251 contributes to the FMN binding site. The active-site Proton acceptor is the histidine 275. Arginine 278 is a substrate binding site. Position 306-330 (306-330 (DSGIRNGLDVVRMLALGADTVLLGR)) interacts with FMN.

Belongs to the FMN-dependent alpha-hydroxy acid dehydrogenase family. It depends on FMN as a cofactor.

The protein resides in the cell inner membrane. The catalysed reaction is (S)-lactate + A = pyruvate + AH2. Catalyzes the conversion of L-lactate to pyruvate. Is coupled to the respiratory chain. This is L-lactate dehydrogenase from Acinetobacter baumannii (strain SDF).